Here is a 289-residue protein sequence, read N- to C-terminus: tRNA dimethylallyltransferase (289 aa).

Residue 9–16 (GTTASGKT) participates in ATP binding. 11–16 (TASGKT) is a substrate binding site. The interaction with substrate tRNA stretch occupies residues 34-37 (DSLC).

The protein belongs to the IPP transferase family. As to quaternary structure, monomer. Mg(2+) is required as a cofactor.

It catalyses the reaction adenosine(37) in tRNA + dimethylallyl diphosphate = N(6)-dimethylallyladenosine(37) in tRNA + diphosphate. Its function is as follows. Catalyzes the transfer of a dimethylallyl group onto the adenine at position 37 in tRNAs that read codons beginning with uridine, leading to the formation of N6-(dimethylallyl)adenosine (i(6)A). The chain is tRNA dimethylallyltransferase from Campylobacter jejuni subsp. jejuni serotype O:23/36 (strain 81-176).